The primary structure comprises 204 residues: Molybdenum cofactor guanylyltransferase (204 aa).

Residues 12–14 (LAG), K25, N53, D71, and D101 each bind GTP. Residue D101 coordinates Mg(2+).

Belongs to the MobA family. In terms of assembly, monomer. It depends on Mg(2+) as a cofactor.

It is found in the cytoplasm. It carries out the reaction Mo-molybdopterin + GTP + H(+) = Mo-molybdopterin guanine dinucleotide + diphosphate. Functionally, transfers a GMP moiety from GTP to Mo-molybdopterin (Mo-MPT) cofactor (Moco or molybdenum cofactor) to form Mo-molybdopterin guanine dinucleotide (Mo-MGD) cofactor. This Ralstonia nicotianae (strain ATCC BAA-1114 / GMI1000) (Ralstonia solanacearum) protein is Molybdenum cofactor guanylyltransferase.